A 340-amino-acid chain; its full sequence is uncharacterized protein (340 aa).

2 helical membrane passes run 162–182 (PLVP…VLAG) and 239–259 (FWIS…IVVP).

It is found in the cell membrane. This is an uncharacterized protein from Mycobacterium bovis (strain ATCC BAA-935 / AF2122/97).